The primary structure comprises 1621 residues: MGAAGFLWLLPPLLLAAASYSGAATDQRAGSPASGPPLQPREPLSYSRLQRKSLAVDFVVPSLFRVYARDLLLPQPRSPSEPEAGGLEARGSLALDCEPLLRLLGPLPGISWADGASSPSPEAGPTLSRVLKGGSVRKLRRAKQLVLELGEETILEGCIGPPEEVAAVGILQFNLSELFSWWILHGEGRLRIRLMPEKKASEVGREGRLSSAIRASQPRLLFQIFGTGHSSMESPSETPSPPGTFMWNLTWTMKDSFPFLSHRSRYGLECSFDFPCELEYSPPLHNHGNQSWSWRHVPSEEASRMNLLDGPEAEHSQEMPRGSFLLLNTSADSKHTILSPWMRSSSDHCTLAVSVHRHLQPSGRYVAQLLPHNEAGREILLVPTPGKHGWTVLQGRVGRPANPFRVALEYISSGNRSLSAVDFFALKNCSEGTSPGSKMALQSSFTCWNGTVLQLGQACDFHQDCAQGEDEGQLCSKLPAGFYCNFENGFCGWTQSPLSPHMPRWQVRTLRDAHSQGHQGRALLLSTTDILASEGATVTSATFPAPMKNSPCELRMSWLIRGVLRGNVSLVLVENKTGKEQSRTVWHVATDEGLSLWQHTVLSLLDVTDRFWLQIVTWWGPGSRATVGFDNISISLDCYLTISGEEKMSLNSVPKSRNLFEKNPNKESKSWANISGPTPIFDPTVHWLFTTCGASGPHGPTQAQCNNAYQNSNLSVVVGSEGPLKGVQIWKVPATDTYSISGYGAAGGKGGKNTMMRSHGVSVLGIFNLEKGDTLYILVGQQGEDACPRANQLIQKVCVGENNVIEEEIRVNRSVHEWAGGGGGGGGATYVFKMKDGVPVPLIIAAGGGGRAYGAKTETFHPERLESNSSVLGLNGNSGAAGGGGGWNDNTSLLWAGKSLLEGAAGGHSCPQAMKKWGWETRGGFGGGGGGCSSGGGGGGYIGGNAASNNDPEMDGEDGVSFISPLGILYTPALKVMEGHGEVNIKHYLNCSHCEVDECHMDPESHKVICFCDHGTVLADDGVSCIVSPTPEPHLPLSLILSVVTSALVAALVLAFSGIMIVYRRKHQELQAMQMELQSPEYKLSKLRTSTIMTDYNPNYCFAGKTSSISDLKEVPRKNITLIRGLGHGAFGEVYEGQVSGMPNDPSPLQVAVKTLPEVCSEQDELDFLMEALIISKFNHQNIVRCIGVSLQALPRFILLELMAGGDLKSFLRETRPRPNQPTSLAMLDLLHVARDIACGCQYLEENHFIHRDIAARNCLLTCPGAGRIAKIGDFGMARDIYRASYYRKGGCAMLPVKWMPPEAFMEGIFTSKTDTWSFGVLLWEIFSLGYMPYPSKSNQEVLEFVTSGGRMDPPKNCPGPVYRIMTQCWQHQPEDRPNFAIILERIEYCTQDPDVINTALPIEYGPVVEEEEKVPMRPKDPEGMPPLLVSPQPAKHEEASAAPQPAALTAPGPSVKKPPGAGAGAGAGAGAGPVPRGAADRGHVNMAFSQPNPPPELHKGPGSRNKPTSLWNPTYGSWFTEKPAKKTHPPPGAEPQARAGAAEGGWTGPGAGPRRAEAALLLEPSALSATMKEVPLFRLRHFPCGNVNYGYQQQGLPLEATAAPGDTMLKSKNKVTQPGP.

The signal sequence occupies residues 1–18 (MGAAGFLWLLPPLLLAAA). Topologically, residues 19–1042 (SYSGAATDQR…PHLPLSLILS (1024 aa)) are extracellular. The interval 48–70 (RLQRKSLAVDFVVPSLFRVYARD) is heparin-binding region. N-linked (GlcNAc...) asparagine glycosylation is found at Asn-174, Asn-248, Asn-289, Asn-328, Asn-415, Asn-428, Asn-449, Asn-567, Asn-575, Asn-631, and Asn-673. Residues 268–431 (LECSFDFPCE…DFFALKNCSE (164 aa)) enclose the MAM 1 domain. An LDL-receptor class A domain is found at 441-477 (LQSSFTCWNGTVLQLGQACDFHQDCAQGEDEGQLCSK). An MAM 2 domain is found at 482-640 (FYCNFENGFC…NISISLDCYL (159 aa)). A disulfide bridge connects residues Cys-692 and Cys-705. A glycan (N-linked (GlcNAc...) asparagine) is linked at Asn-713. Cys-787 and Cys-798 form a disulfide bridge. 3 N-linked (GlcNAc...) asparagine glycosylation sites follow: Asn-812, Asn-868, and Asn-890. Cys-910 and Cys-932 are joined by a disulfide. An N-linked (GlcNAc...) asparagine glycan is attached at Asn-990. 3 disulfides stabilise this stretch: Cys-991/Cys-999, Cys-994/Cys-1010, and Cys-1012/Cys-1025. The tract at residues 991–1029 (CSHCEVDECHMDPESHKVICFCDHGTVLADDGVSCIVSP) is EGF-like. The chain crosses the membrane as a helical span at residues 1043-1063 (VVTSALVAALVLAFSGIMIVY). Residues 1064–1621 (RRKHQELQAM…SKNKVTQPGP (558 aa)) are Cytoplasmic-facing. Tyr-1082, Tyr-1096, and Tyr-1100 each carry phosphotyrosine. Positions 1120 to 1396 (ITLIRGLGHG…IEYCTQDPDV (277 aa)) constitute a Protein kinase domain. ATP contacts are provided by residues 1126–1134 (LGHGAFGEV) and His-1128. Tyr-1135 is subject to Phosphotyrosine. ATP-binding positions include Lys-1154 and 1201 to 1203 (ELM). Residue Asp-1253 is the Proton acceptor of the active site. Position 1274 (Asp-1274) interacts with ATP. Tyr-1282 carries the post-translational modification Phosphotyrosine. The interval 1412-1556 (EEKVPMRPKD…WTGPGAGPRR (145 aa)) is disordered. Basic and acidic residues predominate over residues 1414–1423 (KVPMRPKDPE). Positions 1441–1461 (SAAPQPAALTAPGPSVKKPPG) are enriched in low complexity. The segment covering 1462-1472 (AGAGAGAGAGA) has biased composition (gly residues). Over residues 1506–1518 (NKPTSLWNPTYGS) the composition is skewed to polar residues. Tyr-1516 is subject to Phosphotyrosine. Positions 1543-1552 (AEGGWTGPGA) are enriched in gly residues.

Belongs to the protein kinase superfamily. Tyr protein kinase family. Insulin receptor subfamily. Homodimer; homodimerizes following heparin- and ligand-binding. Interacts with CBL, IRS1, PIK3R1 and PLCG1. Interacts with FRS2 and SHC1. Interacts with PTN and MDK. In terms of processing, phosphorylated at tyrosine residues by autocatalysis, which activates kinase activity. In cells not stimulated by a ligand, receptor protein tyrosine phosphatase beta and zeta complex (PTPRB/PTPRZ1) dephosphorylates ALK at the sites in ALK that are undergoing autophosphorylation through autoactivation. In terms of tissue distribution, mainly expressed in central nervous system (CNS) and other parts of the brain such as the paraventricular nucleus (PVN) of the hypothalamus. Expression is also found in peripheral nervous systems, eye, nasal epithelium, olfactory nerve, tongue, skin, tissue surrounding the esophagus, stomach, midgut, as well as testis and ovary.

Its subcellular location is the cell membrane. It catalyses the reaction L-tyrosyl-[protein] + ATP = O-phospho-L-tyrosyl-[protein] + ADP + H(+). With respect to regulation, activated upon ALKAL2 ligand-binding. ALKAL2-driven activation is coupled with heparin-binding. Following ligand-binding, homodimerizes and autophosphorylates, activating its kinase activity. Inactivated through dephosphorylation by receptor protein tyrosine phosphatase beta and zeta complex (PTPRB/PTPRZ1) when there is no stimulation by a ligand. Neuronal receptor tyrosine kinase that is essentially and transiently expressed in specific regions of the central and peripheral nervous systems and plays an important role in the genesis and differentiation of the nervous system. Also acts as a key thinness protein involved in the resistance to weight gain: in hypothalamic neurons, controls energy expenditure acting as a negative regulator of white adipose tissue lipolysis and sympathetic tone to fine-tune energy homeostasis. Following activation by ALKAL2 ligand at the cell surface, transduces an extracellular signal into an intracellular response. In contrast, ALKAL1 is not a potent physiological ligand for ALK. Ligand-binding to the extracellular domain induces tyrosine kinase activation, leading to activation of the mitogen-activated protein kinase (MAPK) pathway. Phosphorylates almost exclusively at the first tyrosine of the Y-x-x-x-Y-Y motif. Induces tyrosine phosphorylation of CBL, FRS2, IRS1 and SHC1, as well as of the MAP kinases MAPK1/ERK2 and MAPK3/ERK1. ALK activation may also be regulated by pleiotrophin (PTN) and midkine (MDK). PTN-binding induces MAPK pathway activation, which is important for the anti-apoptotic signaling of PTN and regulation of cell proliferation. MDK-binding induces phosphorylation of the ALK target insulin receptor substrate (IRS1), activates mitogen-activated protein kinases (MAPKs) and PI3-kinase, resulting also in cell proliferation induction. Drives NF-kappa-B activation, probably through IRS1 and the activation of the AKT serine/threonine kinase. Recruitment of IRS1 to activated ALK and the activation of NF-kappa-B are essential for the autocrine growth and survival signaling of MDK. This Mus musculus (Mouse) protein is ALK tyrosine kinase receptor.